Here is a 231-residue protein sequence, read N- to C-terminus: Ribose-5-phosphate isomerase A (231 aa).

Substrate is bound by residues 32–35 (TGST), 85–88 (DGAD), and 98–101 (KGGG). The active-site Proton acceptor is the Glu107. Residue Lys125 participates in substrate binding.

The protein belongs to the ribose 5-phosphate isomerase family. Homodimer.

The catalysed reaction is aldehydo-D-ribose 5-phosphate = D-ribulose 5-phosphate. Its pathway is carbohydrate degradation; pentose phosphate pathway; D-ribose 5-phosphate from D-ribulose 5-phosphate (non-oxidative stage): step 1/1. Catalyzes the reversible conversion of ribose-5-phosphate to ribulose 5-phosphate. This Paraburkholderia phymatum (strain DSM 17167 / CIP 108236 / LMG 21445 / STM815) (Burkholderia phymatum) protein is Ribose-5-phosphate isomerase A.